The sequence spans 473 residues: Allene oxide synthase CYP74A2 (473 aa).

Positions 88, 119, and 123 each coordinate heme b. Positions 199 and 282 each coordinate (13S)-hydroperoxy-(9Z,11E)-octadecadienoate. Heme b contacts are provided by Lys-424 and Cys-426.

It belongs to the cytochrome P450 family. The cofactor is heme b.

The catalysed reaction is (13S)-hydroperoxy-(9Z,11E,15Z)-octadecatrienoate = (9Z,13S,15Z)-12,13-epoxyoctadeca-9,11,15-trienoate + H2O. It catalyses the reaction (13S)-hydroperoxy-(9Z,11E)-octadecadienoate = (9Z,13S)-12,13-epoxyoctadeca-9,11-dienoate + H2O. Its pathway is lipid metabolism; oxylipin biosynthesis. Its function is as follows. Cytochrome P450 enzyme involved in the biosynthesis of oxylipin jasmonates, important phytohormones acting as growth regulators and signaling molecules for plant defense. Functions as an allene oxide synthase that converts hydroperoxy fatty acids to unstable allene epoxides. Catalyzes the dehydration of 13-HPOTE ((13S)-hydroperoxy-(9Z,11E,15Z)-octadecatrienoate). Also catalyzes the dehydration of 13-HPODE ((13S)-hydroperoxy-(9Z,11E)-octadecadienoate). This chain is Allene oxide synthase CYP74A2, found in Parthenium argentatum (Guayule rubber plant).